The chain runs to 650 residues: Acetyl-coenzyme A synthetase (650 aa).

CoA contacts are provided by residues 191 to 194, T311, and N335; that span reads RGGR. ATP contacts are provided by residues 387-389, 411-416, D500, and R515; these read GEP and DTWWQT. S523 contacts CoA. An ATP-binding site is contributed by R526. Residues V537, H539, and V542 each coordinate Mg(2+). R584 provides a ligand contact to CoA. At K609 the chain carries N6-acetyllysine.

The protein belongs to the ATP-dependent AMP-binding enzyme family. Requires Mg(2+) as cofactor. Acetylated. Deacetylation by the SIR2-homolog deacetylase activates the enzyme.

It carries out the reaction acetate + ATP + CoA = acetyl-CoA + AMP + diphosphate. Its function is as follows. Catalyzes the conversion of acetate into acetyl-CoA (AcCoA), an essential intermediate at the junction of anabolic and catabolic pathways. AcsA undergoes a two-step reaction. In the first half reaction, AcsA combines acetate with ATP to form acetyl-adenylate (AcAMP) intermediate. In the second half reaction, it can then transfer the acetyl group from AcAMP to the sulfhydryl group of CoA, forming the product AcCoA. In Shewanella oneidensis (strain ATCC 700550 / JCM 31522 / CIP 106686 / LMG 19005 / NCIMB 14063 / MR-1), this protein is Acetyl-coenzyme A synthetase.